The following is a 353-amino-acid chain: Thiamine-phosphate synthase (353 aa).

The unknown stretch occupies residues 1–128 (MKSMPVAPIA…AASAAAIRYG (128 aa)). The tract at residues 129–353 (LYDLEVTVLQ…TSLQLLEALR (225 aa)) is thiamine-phosphate synthase. 4-amino-2-methyl-5-(diphosphooxymethyl)pyrimidine contacts are provided by residues 185–189 (QYRNK) and Asn-217. Positions 218 and 237 each coordinate Mg(2+). A 4-amino-2-methyl-5-(diphosphooxymethyl)pyrimidine-binding site is contributed by Ser-256. Position 282–284 (282–284 (TAT)) interacts with 2-[(2R,5Z)-2-carboxy-4-methylthiazol-5(2H)-ylidene]ethyl phosphate. Lys-285 is a 4-amino-2-methyl-5-(diphosphooxymethyl)pyrimidine binding site. Gly-312 contacts 2-[(2R,5Z)-2-carboxy-4-methylthiazol-5(2H)-ylidene]ethyl phosphate.

Belongs to the thiamine-phosphate synthase family. It depends on Mg(2+) as a cofactor.

The catalysed reaction is 2-[(2R,5Z)-2-carboxy-4-methylthiazol-5(2H)-ylidene]ethyl phosphate + 4-amino-2-methyl-5-(diphosphooxymethyl)pyrimidine + 2 H(+) = thiamine phosphate + CO2 + diphosphate. It catalyses the reaction 2-(2-carboxy-4-methylthiazol-5-yl)ethyl phosphate + 4-amino-2-methyl-5-(diphosphooxymethyl)pyrimidine + 2 H(+) = thiamine phosphate + CO2 + diphosphate. The enzyme catalyses 4-methyl-5-(2-phosphooxyethyl)-thiazole + 4-amino-2-methyl-5-(diphosphooxymethyl)pyrimidine + H(+) = thiamine phosphate + diphosphate. It participates in cofactor biosynthesis; thiamine diphosphate biosynthesis; thiamine phosphate from 4-amino-2-methyl-5-diphosphomethylpyrimidine and 4-methyl-5-(2-phosphoethyl)-thiazole: step 1/1. Condenses 4-methyl-5-(beta-hydroxyethyl)thiazole monophosphate (THZ-P) and 2-methyl-4-amino-5-hydroxymethyl pyrimidine pyrophosphate (HMP-PP) to form thiamine monophosphate (TMP). This Prochlorococcus marinus (strain MIT 9303) protein is Thiamine-phosphate synthase.